Consider the following 341-residue polypeptide: S-adenosylmethionine:tRNA ribosyltransferase-isomerase (341 aa).

The protein belongs to the QueA family. In terms of assembly, monomer.

It is found in the cytoplasm. It catalyses the reaction 7-aminomethyl-7-carbaguanosine(34) in tRNA + S-adenosyl-L-methionine = epoxyqueuosine(34) in tRNA + adenine + L-methionine + 2 H(+). The protein operates within tRNA modification; tRNA-queuosine biosynthesis. Functionally, transfers and isomerizes the ribose moiety from AdoMet to the 7-aminomethyl group of 7-deazaguanine (preQ1-tRNA) to give epoxyqueuosine (oQ-tRNA). The protein is S-adenosylmethionine:tRNA ribosyltransferase-isomerase of Pelotomaculum thermopropionicum (strain DSM 13744 / JCM 10971 / SI).